A 1380-amino-acid chain; its full sequence is DNA-directed RNA polymerase subunit beta (1380 aa).

Belongs to the RNA polymerase beta chain family. As to quaternary structure, the RNAP catalytic core consists of 2 alpha, 1 beta, 1 beta' and 1 omega subunit. When a sigma factor is associated with the core the holoenzyme is formed, which can initiate transcription.

It carries out the reaction RNA(n) + a ribonucleoside 5'-triphosphate = RNA(n+1) + diphosphate. In terms of biological role, DNA-dependent RNA polymerase catalyzes the transcription of DNA into RNA using the four ribonucleoside triphosphates as substrates. This Rhizobium meliloti (strain 1021) (Ensifer meliloti) protein is DNA-directed RNA polymerase subunit beta.